We begin with the raw amino-acid sequence, 853 residues long: Thrombospondin type-1 domain-containing protein 1 (853 aa).

The first 24 residues, 1-24 (MKPMLKDFSNLLLVVLCDYVLGEA), serve as a signal peptide directing secretion. At 25 to 414 (EYLLLREPGH…QPQGPVKSNN (390 aa)) the chain is on the extracellular side. N-linked (GlcNAc...) asparagine glycosylation is found at Asn39, Asn53, Asn58, Asn69, Asn80, Asn135, and Asn304. The region spanning 341–394 (IETWGLWQPWSQCSATCGDGVRERRRVCLTSFPSRPGCPGMSLEASLCSLEECA) is the TSP type-1 domain. 3 disulfide bridges follow: Cys353–Cys388, Cys357–Cys393, and Cys368–Cys378. A helical transmembrane segment spans residues 415 to 435 (IVTVTGISLCLFIIIATVLIT). Topologically, residues 436 to 853 (LWRRFGRPAK…STLSVEKLVI (418 aa)) are cytoplasmic. 4 disordered regions span residues 445–518 (KCST…ESFQ), 624–650 (TLIR…RNAH), 668–702 (ERSM…QSRG), and 714–800 (QEAS…RKDK). Ser464 carries the phosphoserine modification. Over residues 671–686 (MSTLTPRQAPAYSTRT) the composition is skewed to polar residues. Positions 687–697 (RTCEQAEDRFR) are enriched in basic and acidic residues. The segment covering 767–795 (SHKSVSRKQSSPTSPKDSYQRVSPLSPSQ) has biased composition (polar residues).

As to quaternary structure, part of a complex composed of THSD1, PTK2/FAK1, TLN1 and VCL. Interacts with TLN1.

The protein resides in the endosome membrane. Its subcellular location is the cell junction. It localises to the focal adhesion. In terms of biological role, is a positive regulator of nascent focal adhesion assembly, involved in the modulation of endothelial cell attachment to the extracellular matrix. The sequence is that of Thrombospondin type-1 domain-containing protein 1 (THSD1) from Pongo abelii (Sumatran orangutan).